The following is an 857-amino-acid chain: MVRTRPVPCVPSPDVNTATRRNPGRPKKQSIGADLSTTISKPGRPKKLSIGADLTTIRKPGRPKKLGADLTTIIRKPGRPTKLSNKQSLTALNEPECRIRKCVVKIRRIKVKNGVVSEISRNDAPDVDASTFEPARNSTMYIPSKVQKSTQPQNIKENVAGPETSPCQQRIRSKSPSGPAAEISPKKPPRFFHRDQPLTRTRSSVTRNVFDFLSQSQIEDDSDREDPAADIIQRLVKDGKACVMVRSRKIGKPRAKRTAKKVRPVGNRRKVSTKDNEPEPVKVVPKSIEPRLQKPSRSLSTIFEPEEDYSNDSEHGYVQPIEVPVQVHVEPSTSKQAHEGAYSNLARSVMLNQTQAQNPLPSTDRRRELINMARQLVSTPLNRRAPPVTDVSATTTALSPIAHQSPNAVRTAGGKSPWRVSDDSPLPNTFMFGFNNSQMPSYSSDHVQRRHVYVPDSPVEHAENIPHEESICPPLHEQNHDSNANDSNEENRPPPTISKSMSINDQESEENAENFVHLPNPRRTLQKRTPFKDINILEVVTLPSWKKNVTATVSKEITPTRVAPRPMATSSPAQRSQTRSNLFGFDDDFACEDIPRKSTTPSKGIAPTSMSLNREVTPALANRNQTEVNTFGCNEILPCENIPKEKETNTEERTSSSQNLFGFDEFITESQDSPANFTGLSQNVNLHDKLHRLAELRPRDGELPQVSYTSIRSDCLGESHSKQTDIRYMLCSTMIAPPRPAKRKPAAPTARESMGLFRVDQDEPEQSFADKQPRRTYVKERPQRKRKKRVQILYIESESEDEDEQDSHDKSLDSPEKKRHHVKRPRRDIEHEAKLEQFVTSFNKQCEEVEKFPVIIE.

Disordered regions lie at residues 1–50 and 146–194; these read MVRT…KLSI and VQKS…FFHR. Polar residues-rich tracts occupy residues 146-156 and 165-176; these read VQKSTQPQNIK and SPCQQRIRSKSP. 4 positions are modified to phosphoserine: serine 173, serine 175, serine 184, and serine 222. The segment covering 251-271 has biased composition (basic residues); it reads GKPRAKRTAKKVRPVGNRRKV. The segment at 251–281 is disordered; sequence GKPRAKRTAKKVRPVGNRRKVSTKDNEPEPV. A Phosphoserine modification is found at serine 405. 2 disordered regions span residues 470–514 and 737–830; these read SICP…NAEN and PPRP…RDIE. Basic and acidic residues predominate over residues 771-781; sequence KQPRRTYVKER. Residues 797–806 are compositionally biased toward acidic residues; sequence SESEDEDEQD. The span at 807-816 shows a compositional bias: basic and acidic residues; the sequence is SHDKSLDSPE. Basic residues predominate over residues 817 to 826; the sequence is KKRHHVKRPR.

It localises to the nucleus. Its subcellular location is the chromosome. Regulator of sister chromatid cohesion in mitosis. Probably involved in development of the central nervous system. The protein is Protein dalmatian (dmt) of Drosophila melanogaster (Fruit fly).